A 138-amino-acid chain; its full sequence is High mobility group B protein 4 (138 aa).

Disordered stretches follow at residues 1-41 (MKGG…PPSA) and 105-138 (LKLA…EDDD). Residues 18–29 (KTRGRKAGKKTK) show a composition bias toward basic residues. The segment at residues 35 to 104 (PKRPPSAFFV…EYIKNVQQYN (70 aa)) is a DNA-binding region (HMG box). 2 positions are modified to phosphoserine: serine 123 and serine 130. Positions 126-138 (DEAVSEEEAEDDD) are enriched in acidic residues.

It belongs to the HMGB family. As to expression, mostly expressed roots and flowers, and, to a lower extent, in stems and leaves.

Its subcellular location is the nucleus. It is found in the cytoplasm. The protein localises to the cytosol. Functionally, binds preferentially double-stranded DNA. In Arabidopsis thaliana (Mouse-ear cress), this protein is High mobility group B protein 4 (HMGB4).